Reading from the N-terminus, the 466-residue chain is Alpha-1A adrenergic receptor (466 aa).

Topologically, residues 1–27 are extracellular; the sequence is MVFLSGNASDSSNCTHPPPPVNISKAI. N-linked (GlcNAc...) asparagine glycosylation is found at N7, N13, and N22. Residues 28 to 51 traverse the membrane as a helical segment; that stretch reads LLGVILGGLILFGVLGNILVILSV. The Cytoplasmic segment spans residues 52 to 64; the sequence is ACHRHLHSVTHYY. Residues 65-88 form a helical membrane-spanning segment; the sequence is IVNLAVADLLLTSTVLPFSAIFEI. Residues 89–99 are Extracellular-facing; that stretch reads LGYWAFGRVFC. C99 and C176 form a disulfide bridge. The chain crosses the membrane as a helical span at residues 100–122; it reads NVWAAVDVLCCTASIMGLCIISI. Residues 123–143 lie on the Cytoplasmic side of the membrane; it reads DRYIGVSYPLRYPTIVTQKRG. A helical membrane pass occupies residues 144 to 167; sequence LMALLCVWALSLVISIGPLFGWRQ. Over 168-181 the chain is Extracellular; it reads PAPEDETICQINEE. Residues 182 to 205 form a helical membrane-spanning segment; that stretch reads PGYVLFSALGSFYVPLTIILVMYC. The Cytoplasmic segment spans residues 206 to 273; that stretch reads RVYVVAKRES…FSREKKAAKT (68 aa). S215 carries the phosphoserine; by PKA modification. A helical membrane pass occupies residues 274–297; it reads LGIVVGCFVLCWLPFFLVMPIGSF. Over 298–305 the chain is Extracellular; sequence FPDFRPSE. The chain crosses the membrane as a helical span at residues 306-329; that stretch reads TVFKIAFWLGYLNSCINPIIYPCS. The Cytoplasmic portion of the chain corresponds to 330 to 466; that stretch reads SQEFKKAFQN…ISLSENGEEV (137 aa). The short motif at 334–349 is the Nuclear localization signal element; that stretch reads KKAFQNVLRIQCLRRK. Residue C345 is the site of S-palmitoyl cysteine attachment.

This sequence belongs to the G-protein coupled receptor 1 family. Adrenergic receptor subfamily. ADRA1A sub-subfamily. As to quaternary structure, homo- and heterooligomer. Heterooligomerizes with ADRA1B homooligomers in cardiac myocytes. Interacts with CAVIN4.

The protein localises to the nucleus membrane. The protein resides in the cell membrane. Its subcellular location is the cytoplasm. It is found in the membrane. It localises to the caveola. In terms of biological role, this alpha-adrenergic receptor mediates its action by association with G proteins that activate a phosphatidylinositol-calcium second messenger system. Its effect is mediated by G(q) and G(11) proteins. Nuclear ADRA1A-ADRA1B heterooligomers regulate phenylephrine (PE)-stimulated ERK signaling in cardiac myocytes. In Bos taurus (Bovine), this protein is Alpha-1A adrenergic receptor (ADRA1A).